The sequence spans 303 residues: Acetylglutamate kinase (303 aa).

Residues 73–74 (GG), Arg-95, and Asn-194 contribute to the substrate site.

The protein belongs to the acetylglutamate kinase family. ArgB subfamily.

Its subcellular location is the cytoplasm. It carries out the reaction N-acetyl-L-glutamate + ATP = N-acetyl-L-glutamyl 5-phosphate + ADP. Its pathway is amino-acid biosynthesis; L-arginine biosynthesis; N(2)-acetyl-L-ornithine from L-glutamate: step 2/4. Functionally, catalyzes the ATP-dependent phosphorylation of N-acetyl-L-glutamate. The polypeptide is Acetylglutamate kinase (Saccharopolyspora erythraea (strain ATCC 11635 / DSM 40517 / JCM 4748 / NBRC 13426 / NCIMB 8594 / NRRL 2338)).